We begin with the raw amino-acid sequence, 592 residues long: Aspartate--tRNA(Asp/Asn) ligase (592 aa).

Glu172 provides a ligand contact to L-aspartate. Residues 196 to 199 (QLFK) form an aspartate region. Residue Arg218 coordinates L-aspartate. Residues 218 to 220 (RDE) and Gln227 contribute to the ATP site. An L-aspartate-binding site is contributed by His450. Residue Glu484 coordinates ATP. Residue Arg491 participates in L-aspartate binding. Residue 536-539 (GLDR) coordinates ATP.

The protein belongs to the class-II aminoacyl-tRNA synthetase family. Type 1 subfamily. As to quaternary structure, homodimer.

The protein resides in the cytoplasm. The enzyme catalyses tRNA(Asx) + L-aspartate + ATP = L-aspartyl-tRNA(Asx) + AMP + diphosphate. Aspartyl-tRNA synthetase with relaxed tRNA specificity since it is able to aspartylate not only its cognate tRNA(Asp) but also tRNA(Asn). Reaction proceeds in two steps: L-aspartate is first activated by ATP to form Asp-AMP and then transferred to the acceptor end of tRNA(Asp/Asn). This Thioalkalivibrio sulfidiphilus (strain HL-EbGR7) protein is Aspartate--tRNA(Asp/Asn) ligase.